A 198-amino-acid polypeptide reads, in one-letter code: MAVSSEQIKDLRERTGAGMMDCKKALEEKGGDIEKAVTYLREKGLAKAAKRAGRETGEGKVIAYVHGTGKTGVLVELNCETDFVANNEAFEALGKEIALQITAMSPLYVSEESIPKSEIENEMSVQKALLEKEGKKADQIEKILPGKMKKYYEDICLIHQKSIRDNSKTINDLLQEAIAKFGENITVGRFSRFQVGGN.

The segment at 81–84 (TDFV) is involved in Mg(2+) ion dislocation from EF-Tu.

This sequence belongs to the EF-Ts family.

It is found in the cytoplasm. In terms of biological role, associates with the EF-Tu.GDP complex and induces the exchange of GDP to GTP. It remains bound to the aminoacyl-tRNA.EF-Tu.GTP complex up to the GTP hydrolysis stage on the ribosome. The polypeptide is Elongation factor Ts (Leptospira biflexa serovar Patoc (strain Patoc 1 / Ames)).